The sequence spans 85 residues: Small ribosomal subunit protein bS20 (85 aa).

The disordered stretch occupies residues 1–24 (MANIKSAIKRAKLSEERRSHNASI).

The protein belongs to the bacterial ribosomal protein bS20 family.

Binds directly to 16S ribosomal RNA. This chain is Small ribosomal subunit protein bS20, found in Bacillus mycoides (strain KBAB4) (Bacillus weihenstephanensis).